The sequence spans 375 residues: All-trans-retinol dehydrogenase [NAD(+)] ADH1B (375 aa).

Serine 2 carries the N-acetylserine modification. Position 23 is a phosphoserine (serine 23). Tyrosine 35 bears the Phosphotyrosine mark. 7 residues coordinate Zn(2+): cysteine 47, histidine 68, cysteine 98, cysteine 101, cysteine 104, cysteine 112, and cysteine 175. Residues 200-205, aspartate 224, lysine 229, 293-295, and arginine 370 contribute to the NAD(+) site; these read GLGGVG and VGV.

It belongs to the zinc-containing alcohol dehydrogenase family. As to quaternary structure, homodimer or heterodimer of closely related subunits. The cofactor is Zn(2+).

It localises to the cytoplasm. The catalysed reaction is all-trans-retinol + NAD(+) = all-trans-retinal + NADH + H(+). It carries out the reaction all-trans-4-hydroxyretinol + NAD(+) = all-trans-4-hydroxyretinal + NADH + H(+). It catalyses the reaction all-trans-4-oxoretinol + NAD(+) = all-trans-4-oxoretinal + NADH + H(+). Its function is as follows. Catalyzes the NAD-dependent oxidation of all-trans-retinol and its derivatives such as all-trans-4-hydroxyretinol and may participate in retinoid metabolism. In vitro can also catalyze the NADH-dependent reduction of all-trans-retinal and its derivatives such as all-trans-4-oxoretinal. Catalyzes in the oxidative direction with higher efficiency. Has the same affinity for all-trans-4-hydroxyretinol and all-trans-4-oxoretinal. The sequence is that of All-trans-retinol dehydrogenase [NAD(+)] ADH1B from Pan troglodytes (Chimpanzee).